The sequence spans 389 residues: Formate-dependent phosphoribosylglycinamide formyltransferase (389 aa).

N(1)-(5-phospho-beta-D-ribosyl)glycinamide-binding positions include 15–16 (EL) and glutamate 75. ATP is bound by residues arginine 107, lysine 148, 153–158 (SSGKGQ), 188–191 (EEFL), and glutamate 196. The ATP-grasp domain occupies 112–302 (NLAAGELGLR…EFDLHLRAVL (191 aa)). Mg(2+) is bound by residues glutamate 261 and glutamate 273. N(1)-(5-phospho-beta-D-ribosyl)glycinamide contacts are provided by residues aspartate 280, lysine 350, and 357-358 (RR).

It belongs to the PurK/PurT family. As to quaternary structure, homodimer.

The catalysed reaction is N(1)-(5-phospho-beta-D-ribosyl)glycinamide + formate + ATP = N(2)-formyl-N(1)-(5-phospho-beta-D-ribosyl)glycinamide + ADP + phosphate + H(+). It participates in purine metabolism; IMP biosynthesis via de novo pathway; N(2)-formyl-N(1)-(5-phospho-D-ribosyl)glycinamide from N(1)-(5-phospho-D-ribosyl)glycinamide (formate route): step 1/1. Involved in the de novo purine biosynthesis. Catalyzes the transfer of formate to 5-phospho-ribosyl-glycinamide (GAR), producing 5-phospho-ribosyl-N-formylglycinamide (FGAR). Formate is provided by PurU via hydrolysis of 10-formyl-tetrahydrofolate. The protein is Formate-dependent phosphoribosylglycinamide formyltransferase of Synechococcus sp. (strain CC9311).